Reading from the N-terminus, the 449-residue chain is TNF receptor-associated factor family protein DDB_G0272340 (449 aa).

Residues 33-76 form an RING-type; degenerate zinc finger; that stretch reads CPICEECIMDVNKCEALQCKEGHVHCRLCWMKSLESKKECMTCR. TRAF-type zinc fingers lie at residues 133 to 187 and 189 to 251; these read GHIK…IDDS and VHYS…SELS. The stretch at 263–309 forms a coiled coil; sequence MEATIDQHICKFEKSEKEYKKLELEYNRLKDDFKILQSELKVIRELK. Residues 311-437 enclose the MATH domain; that stretch reads NYQNKWVITN…QNSVTLNINI (127 aa).

Belongs to the TNF receptor-associated factor family. A subfamily.

Its subcellular location is the cytoplasm. Probable adapter protein and signal transducer that links members of the tumor necrosis factor receptor family to different signaling pathways by association with the receptor cytoplasmic domain and kinases. This is TNF receptor-associated factor family protein DDB_G0272340 from Dictyostelium discoideum (Social amoeba).